The primary structure comprises 209 residues: GTP-binding protein RHO1 (209 aa).

Position 2 is an N-acetylserine (serine 2). 17–24 serves as a coordination point for GTP; the sequence is GDGACGKT. An Effector region motif is present at residues 39-47; sequence YVPTVFENY. Residues 64 to 68 and 122 to 125 contribute to the GTP site; these read DTAGQ and CKVD. Residues 187-209 form a disordered region; that stretch reads KSKTNGKAKKNTTEKKKKKCVLL. Residues 190–209 show a composition bias toward basic residues; that stretch reads TNGKAKKNTTEKKKKKCVLL. The residue at position 206 (cysteine 206) is a Cysteine methyl ester. The S-geranylgeranyl cysteine moiety is linked to residue cysteine 206. Positions 207-209 are cleaved as a propeptide — removed in mature form; the sequence is VLL.

This sequence belongs to the small GTPase superfamily. Rho family. Interacts with BEM4; the interaction is direct. Interacts with SEC3; the interaction is direct. Interacts with the GAP BAG7. Interacts with the GAP LRG1. Interacts with the GAP SAC7. Interacts with the GAP RDI1. Interacts with the 1,3-beta-glucan synthase component FKS1. Interacts with the protein kinase PKC1. Interacts with the G protein beta subunit STE4. Interacts with SKN7. Interacts with TUS1. Interacts with BNI1.

The protein resides in the cell membrane. The protein localises to the endosome membrane. It localises to the peroxisome membrane. The catalysed reaction is GTP + H2O = GDP + phosphate + H(+). Alternates between an inactive form bound to GDP and an active form bound to GTP. Activated by the guanine nucleotide-exchange factors (GEFs) ROM1, ROM2 and TUS1, and inactivated by GTPase-activating proteins (GAPs) BAG7, BEM2, LRG1, and SAC7, and the Rho GDP-dissociation inhibitor RDI1. The different GAPs regulate RHO1 in a target-specific manner. Acts as a central regulator in the cell wall integrity signaling pathway, which is regulated by the cell cycle and in response to various types of cell wall stress. Integrates signals from different cell surface sensors, and activates a set of effectors, regulating processes including beta-glucan synthesis at the site of wall remodeling, gene expression related to cell wall biogenesis, organization of the actin cytoskeleton, and protein- and secretory vesicle-targeting to the growth site. Activates the protein kinase C (PKC1) MAP kinase cascade, the beta-1,3-glucan synthase (FKS1), the formin BNI1, the exocyst component SEC3 and the transcription factor SKN7. This is GTP-binding protein RHO1 (RHO1) from Saccharomyces cerevisiae (strain ATCC 204508 / S288c) (Baker's yeast).